The chain runs to 100 residues: Small ribosomal subunit protein uS14 (100 aa).

It belongs to the universal ribosomal protein uS14 family. Part of the 30S ribosomal subunit. Contacts proteins S3 and S10.

Its function is as follows. Binds 16S rRNA, required for the assembly of 30S particles and may also be responsible for determining the conformation of the 16S rRNA at the A site. This Synechococcus sp. (strain CC9311) protein is Small ribosomal subunit protein uS14.